The sequence spans 312 residues: Pseudouridine-5'-phosphate glycosidase 2 (312 aa).

E31 (proton donor) is an active-site residue. Substrate contacts are provided by K93 and V113. D145 contacts Mn(2+). Substrate is bound at residue 147–149; that stretch reads SAD. Catalysis depends on K166, which acts as the Nucleophile.

This sequence belongs to the pseudouridine-5'-phosphate glycosidase family. Homotrimer. Mn(2+) is required as a cofactor.

It catalyses the reaction D-ribose 5-phosphate + uracil = psi-UMP + H2O. Catalyzes the reversible cleavage of pseudouridine 5'-phosphate (PsiMP) to ribose 5-phosphate and uracil. Functions biologically in the cleavage direction, as part of a pseudouridine degradation pathway. The protein is Pseudouridine-5'-phosphate glycosidase 2 of Photorhabdus laumondii subsp. laumondii (strain DSM 15139 / CIP 105565 / TT01) (Photorhabdus luminescens subsp. laumondii).